A 1100-amino-acid chain; its full sequence is SLIT-ROBO Rho GTPase-activating protein 2 (1100 aa).

Residues 19-324 form the F-BAR domain; that stretch reads TQVKEIRAQL…AAENLEANSD (306 aa). Coiled coils occupy residues 170-201 and 363-400; these read YNMD…HEEK and GELI…IQDM. Residues 181–203 show a composition bias toward basic and acidic residues; sequence LKEAEKQEEKQMSRSVRHEEKQT. Residues 181–210 are disordered; it reads LKEAEKQEEKQMSRSVRHEEKQTPRSPDSL. The Rho-GAP domain maps to 496–680; that stretch reads VRKQEAIQII…TIIIHHESIF (185 aa). The 60-residue stretch at 738-797 folds into the SH3 domain; the sequence is SDPIEAIARFDYSGRTNRELSFKKGASLLLYSRASDDWWEGRHNGTEGLVPHQYIVVQDM. 2 disordered regions span residues 800–835 and 852–938; these read GYAG…TGGH and EATS…PLDP. Residues 807–823 show a composition bias toward basic and acidic residues; that stretch reads PKADLEGSHDSVEEKVS. Over residues 919–932 the composition is skewed to polar residues; sequence RKSTPTGRSKSFSN. Residues 945 to 972 are a coiled coil; that stretch reads EHSSQDIEATMNTALSELRELERQSNVK. The disordered stretch occupies residues 986–1100; the sequence is KSGGTSEPSS…PPPTDKSCPV (115 aa). 2 stretches are compositionally biased toward polar residues: residues 987–997 and 1008–1049; these read SGGTSEPSSPL and SQHP…GSTF. Residues 1067-1081 are compositionally biased toward low complexity; sequence SSSAGGSPAMGSPTT. Residues 1082–1094 are compositionally biased toward pro residues; sequence TIPPTPPPPPPPT.

The protein resides in the cell membrane. It localises to the cell projection. It is found in the dendritic spine. The protein localises to the postsynaptic density. Its subcellular location is the postsynaptic cell membrane. The protein resides in the lamellipodium. It localises to the cytoplasmic vesicle. It is found in the phagosome. The protein localises to the nucleus. Its subcellular location is the cytoplasm. The protein resides in the cytosol. Functionally, postsynaptic RAC1 GTPase activating protein (GAP) that plays a key role in neuronal morphogenesis and migration mainly during development of the cerebral cortex. Regulates excitatory and inhibitory synapse maturation and density in cortical pyramidal neurons. Mechanistically, acts by binding and deforming membranes, thereby regulating actin dynamics to regulate cell migration and differentiation. The sequence is that of SLIT-ROBO Rho GTPase-activating protein 2 (srgap2) from Danio rerio (Zebrafish).